The chain runs to 205 residues: HTH-type transcriptional repressor KstR2 (205 aa).

The HTH tetR-type domain maps to 10–70 (ASRRDELLQL…EVLRDFLDWL (61 aa)). The segment at residues 33 to 52 (TVRDIADSAGILSGSLYHHF) is a DNA-binding region (H-T-H motif).

As to quaternary structure, homodimer.

Functionally, controls the expression of a small regulon that may play a role in the utilization of cholesterol. The protein is HTH-type transcriptional repressor KstR2 (kstR2) of Mycolicibacterium smegmatis (strain ATCC 700084 / mc(2)155) (Mycobacterium smegmatis).